Consider the following 474-residue polypeptide: Iroquois-class homeodomain protein irx-5 (474 aa).

A DNA-binding region (homeobox; TALE-type) is located at residues 109–171; sequence DPAYRKNASR…NARRRLKKEN (63 aa). Disordered regions lie at residues 174-222, 252-294, and 453-474; these read TWTP…SPDG, ERNG…IQQL, and SQSQ…MSSI. Residues 182–199 show a composition bias toward acidic residues; it reads EDEDDDENIDLEKNEEDD. Pro residues predominate over residues 263–273; the sequence is PPTPPLCPPDQ.

Belongs to the TALE/IRO homeobox family. Early in gastrulation, expressed in cells beneath the blastopore lip. Subsequently expressed in the neural plate in overlapping patterns with other irx members, which all share an anterior border of expression. At the time of neural tube closure (stage 19) in regions of the midbrain, hindbrain, neural tube and optic vesicle, where expression continues during tailbud stages. In stage 34, expressed throughout the eye retina. Does not appear to be expressed in the developing heart or pronephros.

The protein resides in the nucleus. Acts partially redundantly with other irx members in neural patterning. Required for formation of the posterior forebrain, midbrain, hindbrain, and to a lesser extent, spinal cord. Patterns the neuroectoderm in both the anterior/posterior and dorsal/ventral axes. Does not appear to play a role in pronephros kidney development. Involved in craniofacial and gonadal development. Modulates the migration of progenitor cell populations in branchial arches and gonads by repressing CXCL12. In Xenopus laevis (African clawed frog), this protein is Iroquois-class homeodomain protein irx-5 (irx5).